We begin with the raw amino-acid sequence, 513 residues long: ATP synthase subunit alpha (513 aa).

Residue 169–176 (GDRQTGKT) coordinates ATP.

Belongs to the ATPase alpha/beta chains family. F-type ATPases have 2 components, CF(1) - the catalytic core - and CF(0) - the membrane proton channel. CF(1) has five subunits: alpha(3), beta(3), gamma(1), delta(1), epsilon(1). CF(0) has three main subunits: a(1), b(2) and c(9-12). The alpha and beta chains form an alternating ring which encloses part of the gamma chain. CF(1) is attached to CF(0) by a central stalk formed by the gamma and epsilon chains, while a peripheral stalk is formed by the delta and b chains.

The protein localises to the cell inner membrane. It catalyses the reaction ATP + H2O + 4 H(+)(in) = ADP + phosphate + 5 H(+)(out). In terms of biological role, produces ATP from ADP in the presence of a proton gradient across the membrane. The alpha chain is a regulatory subunit. This chain is ATP synthase subunit alpha, found in Bordetella bronchiseptica (strain ATCC BAA-588 / NCTC 13252 / RB50) (Alcaligenes bronchisepticus).